We begin with the raw amino-acid sequence, 548 residues long: ATP synthase subunit alpha (548 aa).

Gly172–Thr179 contacts ATP.

This sequence belongs to the ATPase alpha/beta chains family. As to quaternary structure, F-type ATPases have 2 components, CF(1) - the catalytic core - and CF(0) - the membrane proton channel. CF(1) has five subunits: alpha(3), beta(3), gamma(1), delta(1), epsilon(1). CF(0) has three main subunits: a(1), b(2) and c(9-12). The alpha and beta chains form an alternating ring which encloses part of the gamma chain. CF(1) is attached to CF(0) by a central stalk formed by the gamma and epsilon chains, while a peripheral stalk is formed by the delta and b chains.

The protein resides in the cell membrane. The enzyme catalyses ATP + H2O + 4 H(+)(in) = ADP + phosphate + 5 H(+)(out). Functionally, produces ATP from ADP in the presence of a proton gradient across the membrane. The alpha chain is a regulatory subunit. The polypeptide is ATP synthase subunit alpha (Mycobacteroides abscessus (strain ATCC 19977 / DSM 44196 / CCUG 20993 / CIP 104536 / JCM 13569 / NCTC 13031 / TMC 1543 / L948) (Mycobacterium abscessus)).